The sequence spans 301 residues: Acetyl-coenzyme A carboxylase carboxyl transferase subunit beta (301 aa).

Positions 25–294 (LWIKCPETGE…SAANDVTRGA (270 aa)) constitute a CoA carboxyltransferase N-terminal domain.

Belongs to the AccD/PCCB family. As to quaternary structure, acetyl-CoA carboxylase is a heterohexamer composed of biotin carboxyl carrier protein (AccB), biotin carboxylase (AccC) and two subunits each of ACCase subunit alpha (AccA) and ACCase subunit beta (AccD).

The protein resides in the cytoplasm. The enzyme catalyses N(6)-carboxybiotinyl-L-lysyl-[protein] + acetyl-CoA = N(6)-biotinyl-L-lysyl-[protein] + malonyl-CoA. It functions in the pathway lipid metabolism; malonyl-CoA biosynthesis; malonyl-CoA from acetyl-CoA: step 1/1. Functionally, component of the acetyl coenzyme A carboxylase (ACC) complex. Biotin carboxylase (BC) catalyzes the carboxylation of biotin on its carrier protein (BCCP) and then the CO(2) group is transferred by the transcarboxylase to acetyl-CoA to form malonyl-CoA. This Rhizobium etli (strain ATCC 51251 / DSM 11541 / JCM 21823 / NBRC 15573 / CFN 42) protein is Acetyl-coenzyme A carboxylase carboxyl transferase subunit beta.